The primary structure comprises 338 residues: E3 ubiquitin-protein ligase SPL1 (338 aa).

Residues 1–21 traverse the membrane as a helical segment; sequence MIHLAGFTCCLGGVALYLLTR. The Chloroplast intermembrane portion of the chain corresponds to 22–223; that stretch reads STGRDIKSIT…KLGDLSRRFK (202 aa). Residues 224–246 traverse the membrane as a helical segment; the sequence is YASMGLTVLGVILISKPVIEYIL. At 247–338 the chain is on the cytoplasmic side; that stretch reads KRIEDTLERR…IQQVLKIYRH (92 aa). The segment at 291-326 adopts an RING-type zinc-finger fold; it reads CVVCLDQKYNTAFVECGHMCCCTPCSLQLRTCPLCR.

It localises to the plastid. The protein localises to the chloroplast outer membrane. It carries out the reaction S-ubiquitinyl-[E2 ubiquitin-conjugating enzyme]-L-cysteine + [acceptor protein]-L-lysine = [E2 ubiquitin-conjugating enzyme]-L-cysteine + N(6)-ubiquitinyl-[acceptor protein]-L-lysine.. It functions in the pathway protein modification; protein ubiquitination. Functionally, possesses E3 ubiquitin-protein ligase activity. The polypeptide is E3 ubiquitin-protein ligase SPL1 (Arabidopsis thaliana (Mouse-ear cress)).